The primary structure comprises 60 residues: Sec-independent protein translocase protein TatA (60 aa).

Residues 1–21 form a helical membrane-spanning segment; the sequence is MLSNIGVPGLILILVIALVIF.

This sequence belongs to the TatA/E family. As to quaternary structure, forms a complex with TatC.

The protein localises to the cell membrane. Functionally, part of the twin-arginine translocation (Tat) system that transports large folded proteins containing a characteristic twin-arginine motif in their signal peptide across membranes. TatA could form the protein-conducting channel of the Tat system. This chain is Sec-independent protein translocase protein TatA, found in Anoxybacillus flavithermus (strain DSM 21510 / WK1).